We begin with the raw amino-acid sequence, 793 residues long: MIKSKDYLVDYNVELALKKEGLTKADYIEICNRLKRSPNRTELGMFGVMWSEHCCYRNSRSLLSNFPTTGKNILVGPGENAGVVDLGEGQRLAFKIESHNHPSAIEPFQGAATGVGGILRDIFTMGARPIALLNSLRFGPLDTPINVGLLEGVVSGIAHYGNCVGVPTVGGEVAFDKSYSGNPLVNAMALGIMETKEIVCSGAKGIDFPVIYVGSTTGRDGMGGASFASSELTQASIDDRPAVQVGDPFLEKGLIEGCLEAFKTGYVVAAQDMGAAGLTCSCSEMAAKGGVGIELDLDLVPAREKNMTAYEFLLSESQERMLFVVEPGKEELIMNKFRKWGLQAKVVGKVLEENIVRVIHEKQIVVNLPADSLAEDTPVNKHELLEEPPGFIKDHWKWDETSLPKVSIKGVHFKENNTILDWNQIILRLLDDPTIASKRWIYNQYDYQVQNNTIIAPGIGDAALIRLREIENQNQNSNRGIAAVVDCPNRWVALDPERGAIAAVAEASRNISCVGAKPLAVTDNLNFSSPEDPIGYWQLAKACKGLSKACVVLETPVTGGNVSLYNETALPNGLKQPIQPTPVVGMIGLIQDINSATRQGWKDQGDQIYLLGTSIDPSILNNQNISLAATSYLENIYGLKTGRPPLIDLEFEKLVQLFLRESIANNLIKSAHDISDGGLVIGLAESCISSGLGIECNLPEIDNRLDKLLFAEGGSRVLVSVSPNNIHNIKNSLNNFNIANSEQISFNYLGTVTDNKYFQININQTKIIDLSVNEITNKFERSIPRRINSTIVS.

The active site involves His-53. Tyr-56 and Lys-95 together coordinate ATP. Glu-97 is a Mg(2+) binding site. Residues 98-101 (SHNH) and Arg-120 contribute to the substrate site. His-99 serves as the catalytic Proton acceptor. Position 121 (Asp-121) interacts with Mg(2+). Gln-244 lines the substrate pocket. Asp-272 serves as a coordination point for Mg(2+). 316-318 (ESQ) lines the substrate pocket. Residues Asp-523 and Gly-560 each coordinate ATP. Asn-561 serves as a coordination point for Mg(2+). Ser-563 lines the substrate pocket.

This sequence belongs to the FGAMS family. As to quaternary structure, monomer. Part of the FGAM synthase complex composed of 1 PurL, 1 PurQ and 2 PurS subunits.

It is found in the cytoplasm. It carries out the reaction N(2)-formyl-N(1)-(5-phospho-beta-D-ribosyl)glycinamide + L-glutamine + ATP + H2O = 2-formamido-N(1)-(5-O-phospho-beta-D-ribosyl)acetamidine + L-glutamate + ADP + phosphate + H(+). The protein operates within purine metabolism; IMP biosynthesis via de novo pathway; 5-amino-1-(5-phospho-D-ribosyl)imidazole from N(2)-formyl-N(1)-(5-phospho-D-ribosyl)glycinamide: step 1/2. Part of the phosphoribosylformylglycinamidine synthase complex involved in the purines biosynthetic pathway. Catalyzes the ATP-dependent conversion of formylglycinamide ribonucleotide (FGAR) and glutamine to yield formylglycinamidine ribonucleotide (FGAM) and glutamate. The FGAM synthase complex is composed of three subunits. PurQ produces an ammonia molecule by converting glutamine to glutamate. PurL transfers the ammonia molecule to FGAR to form FGAM in an ATP-dependent manner. PurS interacts with PurQ and PurL and is thought to assist in the transfer of the ammonia molecule from PurQ to PurL. The sequence is that of Phosphoribosylformylglycinamidine synthase subunit PurL from Prochlorococcus marinus (strain SARG / CCMP1375 / SS120).